The chain runs to 763 residues: Ribonucleoside-diphosphate reductase subunit alpha (763 aa).

Residues 5-95 (LFVTKRNGKK…IFHLRKKAYG (91 aa)) enclose the ATP-cone domain. Residues lysine 9, 15–21 (EKINLDK), threonine 55, and lysine 91 contribute to the ATP site. Residue threonine 209 participates in GDP binding. Cysteines 225 and 462 form a disulfide. DTTP is bound by residues 232 to 234 (DNL), arginine 262, and arginine 269. Asparagine 437 is a GDP binding site. The active-site Proton acceptor is the asparagine 437. The Cysteine radical intermediate role is filled by cysteine 439. GDP contacts are provided by residues glutamate 441 and 623 to 625 (ETS). Glutamate 441 (proton acceptor) is an active-site residue.

It belongs to the ribonucleoside diphosphate reductase large chain family. As to quaternary structure, tetramer of two alpha and two beta subunits.

It catalyses the reaction a 2'-deoxyribonucleoside 5'-diphosphate + [thioredoxin]-disulfide + H2O = a ribonucleoside 5'-diphosphate + [thioredoxin]-dithiol. Its activity is regulated as follows. Under complex allosteric control mediated by deoxynucleoside triphosphates and ATP binding to separate specificity and activation sites on the alpha subunit. The type of nucleotide bound at the specificity site determines substrate preference. It seems probable that ATP makes the enzyme reduce CDP and UDP, dGTP favors ADP reduction and dTTP favors GDP reduction. Stimulated by ATP and inhibited by dATP binding to the activity site. In terms of biological role, provides the precursors necessary for DNA synthesis. Catalyzes the biosynthesis of deoxyribonucleotides from the corresponding ribonucleotides. The sequence is that of Ribonucleoside-diphosphate reductase subunit alpha (nrdA) from Buchnera aphidicola subsp. Schizaphis graminum (strain Sg).